A 548-amino-acid chain; its full sequence is Sesquiterpene synthase 9 (548 aa).

Residues aspartate 300, aspartate 304, and glutamate 453 each contribute to the Mg(2+) site. The short motif at 300–304 (DDTFD) is the DDXXD motif element.

The protein belongs to the terpene synthase family. Tpsa subfamily. Requires Mg(2+) as cofactor. Mn(2+) is required as a cofactor. In terms of tissue distribution, mostly expressed in stem and trichomes, to a lower extent in roots, leaves and flowers and, at low levels, in fruits.

The protein localises to the cytoplasm. The catalysed reaction is (2E,6E)-farnesyl diphosphate = germacrene C + diphosphate. It catalyses the reaction (2E)-geranyl diphosphate = terpinolene + diphosphate. The enzyme catalyses (2E)-geranyl diphosphate = limonene + diphosphate. It carries out the reaction (2E)-geranyl diphosphate = beta-myrcene + diphosphate. The catalysed reaction is (2Z,6Z)-farnesyl diphosphate = germacrene C + diphosphate. The protein operates within secondary metabolite biosynthesis; terpenoid biosynthesis. Involved in the biosynthesis of germacrene C, one of the most abundant sesquiterpene in the leaf oil of tomato. Produces mainly germacrene C, but also smaller amounts of germacrene A, B and D when used with farnesyl diphosphate (FPP) as substrate; able to use both (2E,6E)-farnesyl diphosphate ((EE)-FPP) and (2Z,6Z)-farnesyl diphosphate ((ZZ)-FPP). No or low activity with geranylgeranyl diphosphate (GGPP). Can act with a low efficiency as a monoterpene synthase with geranyl diphosphate (GPP) as substrate, thus producing beta-myrcene, limonene and terpinolene. The sequence is that of Sesquiterpene synthase 9 from Solanum lycopersicum (Tomato).